A 319-amino-acid chain; its full sequence is Annexin A4 (319 aa).

Residue T7 is modified to Phosphothreonine. A Phosphoserine modification is found at S12. Annexin repeat units follow at residues 14–85, 86–157, 169–241, and 245–316; these read FNAT…GMMT, PTVL…SLTA, ALVR…AIVK, and NKPA…ILCG. N6-acetyllysine occurs at positions 213, 293, and 300.

The protein belongs to the annexin family.

The protein localises to the zymogen granule membrane. Its function is as follows. Calcium/phospholipid-binding protein which promotes membrane fusion and is involved in exocytosis. This Rattus norvegicus (Rat) protein is Annexin A4 (Anxa4).